We begin with the raw amino-acid sequence, 546 residues long: Chaperonin GroEL 2 (546 aa).

Residues 29-32 (TLGP), 86-90 (DGTTT), G418, 482-484 (NAA), and D498 each bind ATP.

The protein belongs to the chaperonin (HSP60) family. In terms of assembly, forms a cylinder of 14 subunits composed of two heptameric rings stacked back-to-back. Interacts with the co-chaperonin GroES.

The protein localises to the cytoplasm. It carries out the reaction ATP + H2O + a folded polypeptide = ADP + phosphate + an unfolded polypeptide.. In terms of biological role, together with its co-chaperonin GroES, plays an essential role in assisting protein folding. The GroEL-GroES system forms a nano-cage that allows encapsulation of the non-native substrate proteins and provides a physical environment optimized to promote and accelerate protein folding. This Corynebacterium diphtheriae (strain ATCC 700971 / NCTC 13129 / Biotype gravis) protein is Chaperonin GroEL 2.